Consider the following 351-residue polypeptide: Fructose-1,6-bisphosphatase class 1 (351 aa).

4 residues coordinate Mg(2+): Glu94, Asp113, Leu115, and Asp116. Substrate is bound by residues 116–119 (DGSS) and Asn207. Glu279 contacts Mg(2+).

Belongs to the FBPase class 1 family. Homotetramer. Requires Mg(2+) as cofactor.

The protein resides in the cytoplasm. The enzyme catalyses beta-D-fructose 1,6-bisphosphate + H2O = beta-D-fructose 6-phosphate + phosphate. It functions in the pathway carbohydrate biosynthesis; gluconeogenesis. The polypeptide is Fructose-1,6-bisphosphatase class 1 (Methylobacterium radiotolerans (strain ATCC 27329 / DSM 1819 / JCM 2831 / NBRC 15690 / NCIMB 10815 / 0-1)).